The chain runs to 307 residues: Small ribosomal subunit biogenesis GTPase RsgA (307 aa).

The interval methionine 1–methionine 20 is disordered. Positions glycine 10–methionine 20 are enriched in polar residues. A CP-type G domain is found at arginine 85–phenylalanine 242. Residues asparagine 135–aspartate 138 and glycine 184–threonine 192 each bind GTP. Cysteine 266, cysteine 271, histidine 273, and cysteine 279 together coordinate Zn(2+).

This sequence belongs to the TRAFAC class YlqF/YawG GTPase family. RsgA subfamily. As to quaternary structure, monomer. Associates with 30S ribosomal subunit, binds 16S rRNA. It depends on Zn(2+) as a cofactor.

It localises to the cytoplasm. One of several proteins that assist in the late maturation steps of the functional core of the 30S ribosomal subunit. Helps release RbfA from mature subunits. May play a role in the assembly of ribosomal proteins into the subunit. Circularly permuted GTPase that catalyzes slow GTP hydrolysis, GTPase activity is stimulated by the 30S ribosomal subunit. The chain is Small ribosomal subunit biogenesis GTPase RsgA from Neisseria meningitidis serogroup C / serotype 2a (strain ATCC 700532 / DSM 15464 / FAM18).